The sequence spans 556 residues: MKMEGTIKSPANYVPLTPISFLDRSAVVYADRVSIVYGSVKYTWRQTRDRCVRIASALSQLGISTGDVVSVLAPNVPAMVELHFGVPMAGALLCTLNIRHDSSLVAVLLRHSGTKVIFADHQFLQIAEGACEILSNKGDKVPILVLIPEPLTQSVSRKKRSEEMMEYEDVVAMGKSDFEVIRPTDECDAISVNYTSGTTSSPKGVVYSHRGAYLNSLAAVLLNEMHSSPTYLWTNPMFHCNGWCLLWGVTAIGGTNICLRNVTAKAIFDNISQHKVTHMGGAPTILNMIINAPESEQKPLPGKVSFITGAAPPPAHVIFKMEELGFSMFHSYGLTETYGPGTICTWKPEWDSLPREEQAKMKARQGVNHLGLEEIQVKDPVTMRTLPADGVTMGEVVFRGNTVMNGYLKNPEATKEAFKGGWFWSGDLGVKHPDGYIELKDRSKDIIISGGENISSIEVESTLFTHPCVLEAAVVARPDEYWGETACAFVKLKDGSKASAEELISYCRDRLPHYMAPRSIVFEDLPKTSTGKVQKFVLRTKAKALVSLSKKGRSKL.

Residues 554 to 556 (SKL) carry the Microbody targeting signal motif.

Belongs to the ATP-dependent AMP-binding enzyme family. In terms of tissue distribution, expressed in roots, leaves, stems, flowers and developing seeds.

It localises to the peroxisome. It catalyses the reaction butanoate + ATP + CoA = butanoyl-CoA + AMP + diphosphate. The enzyme catalyses hexanoate + ATP + CoA = hexanoyl-CoA + AMP + diphosphate. It carries out the reaction pentanoate + ATP + CoA = pentanoyl-CoA + AMP + diphosphate. The catalysed reaction is 4-methylpentanoate + ATP + CoA = 4-methylpentanoyl-CoA + AMP + diphosphate. In terms of biological role, catalyzes the ligation of CoA on butanoate to produce butanoyl-CoA. Can also use hexanoate, pentanoate and 4-methylpentanoate as substrates with a lower efficiency. This Arabidopsis thaliana (Mouse-ear cress) protein is Butanoate--CoA ligase AAE1.